The chain runs to 342 residues: Nucleoid-associated protein Shewana3_2426 (342 aa).

It belongs to the YejK family.

It is found in the cytoplasm. The protein resides in the nucleoid. This is Nucleoid-associated protein Shewana3_2426 from Shewanella sp. (strain ANA-3).